The chain runs to 1220 residues: DNA-directed RNA polymerase subunit beta' (1220 aa).

C61, C63, C76, and C79 together coordinate Zn(2+). 3 residues coordinate Mg(2+): D450, D452, and D454. The tract at residues 1197–1220 (QPESESEEASDIPKLDDVAKTFDN) is disordered. Residues 1207–1220 (DIPKLDDVAKTFDN) show a composition bias toward basic and acidic residues.

Belongs to the RNA polymerase beta' chain family. In terms of assembly, the RNAP catalytic core consists of 2 alpha, 1 beta, 1 beta' and 1 omega subunit. When a sigma factor is associated with the core the holoenzyme is formed, which can initiate transcription. Mg(2+) is required as a cofactor. The cofactor is Zn(2+).

The enzyme catalyses RNA(n) + a ribonucleoside 5'-triphosphate = RNA(n+1) + diphosphate. Functionally, DNA-dependent RNA polymerase catalyzes the transcription of DNA into RNA using the four ribonucleoside triphosphates as substrates. In Leuconostoc mesenteroides subsp. mesenteroides (strain ATCC 8293 / DSM 20343 / BCRC 11652 / CCM 1803 / JCM 6124 / NCDO 523 / NBRC 100496 / NCIMB 8023 / NCTC 12954 / NRRL B-1118 / 37Y), this protein is DNA-directed RNA polymerase subunit beta'.